A 219-amino-acid polypeptide reads, in one-letter code: Thiamine-phosphate synthase (219 aa).

4-amino-2-methyl-5-(diphosphooxymethyl)pyrimidine is bound by residues 48 to 52 (QFRQK) and Asn-84. Residues Asp-85 and Asp-104 each coordinate Mg(2+). Residue Ser-123 participates in 4-amino-2-methyl-5-(diphosphooxymethyl)pyrimidine binding. 150–152 (TPS) contacts 2-[(2R,5Z)-2-carboxy-4-methylthiazol-5(2H)-ylidene]ethyl phosphate. Lys-153 lines the 4-amino-2-methyl-5-(diphosphooxymethyl)pyrimidine pocket. 2-[(2R,5Z)-2-carboxy-4-methylthiazol-5(2H)-ylidene]ethyl phosphate-binding positions include Gly-181 and 199–200 (IS).

It belongs to the thiamine-phosphate synthase family. It depends on Mg(2+) as a cofactor.

It catalyses the reaction 2-[(2R,5Z)-2-carboxy-4-methylthiazol-5(2H)-ylidene]ethyl phosphate + 4-amino-2-methyl-5-(diphosphooxymethyl)pyrimidine + 2 H(+) = thiamine phosphate + CO2 + diphosphate. The catalysed reaction is 2-(2-carboxy-4-methylthiazol-5-yl)ethyl phosphate + 4-amino-2-methyl-5-(diphosphooxymethyl)pyrimidine + 2 H(+) = thiamine phosphate + CO2 + diphosphate. The enzyme catalyses 4-methyl-5-(2-phosphooxyethyl)-thiazole + 4-amino-2-methyl-5-(diphosphooxymethyl)pyrimidine + H(+) = thiamine phosphate + diphosphate. It functions in the pathway cofactor biosynthesis; thiamine diphosphate biosynthesis; thiamine phosphate from 4-amino-2-methyl-5-diphosphomethylpyrimidine and 4-methyl-5-(2-phosphoethyl)-thiazole: step 1/1. Condenses 4-methyl-5-(beta-hydroxyethyl)thiazole monophosphate (THZ-P) and 2-methyl-4-amino-5-hydroxymethyl pyrimidine pyrophosphate (HMP-PP) to form thiamine monophosphate (TMP). This Helicobacter pylori (strain HPAG1) protein is Thiamine-phosphate synthase.